We begin with the raw amino-acid sequence, 68 residues long: Neuronal regeneration-related protein (68 aa).

The protein is Neuronal regeneration-related protein (NREP) of Gallus gallus (Chicken).